The following is a 434-amino-acid chain: MLLDLNVESPERSGTSSSSVLNSGDAGGGGGGGGGGGLFRFDLLASSPDDDECSGEQHQLPAASGIVTRQLLPPPPPAAPSPAPAWQPPRRAAEDAALAQRPVVAKKTRRGPRSRSSQYRGVTFYRRTGRWESHIWDCGKQVYLGGFDTAHAAARAYDRAAIKFRGLEADINFNLSDYEDDLKQMRNWTKEEFVHILRRQSTGFARGSSKFRGVTLHKCGRWEARMGQLLGKKYIYLGLFDTEVEAARAYDRAAIRFNGREAVTNFEPASYNVDALPDAGNEAIVDGDLDLDLRISQPNARDSKSDVATTGLQLTCDSPESSNITVHQPMGSSPQWTVHHQSTPLPPQHQRLYPSHCLGFLPNLQERPMDRRPELGPMPFPTQAWQMQAPSHLPLLHAAASSGFSAGAGAGVAAATRRQPPFPADHPFYFPPTA.

Residues 1 to 116 are disordered; the sequence is MLLDLNVESP…KTRRGPRSRS (116 aa). Residues 12 to 23 are compositionally biased toward low complexity; the sequence is RSGTSSSSVLNS. The span at 25 to 38 shows a compositional bias: gly residues; the sequence is DAGGGGGGGGGGGL. Over residues 72–87 the composition is skewed to pro residues; it reads LPPPPPAAPSPAPAWQ. Over residues 104 to 113 the composition is skewed to basic residues; it reads VAKKTRRGPR. Positions 106-115 match the Nuclear localization signal motif; it reads KKTRRGPRSR. DNA-binding regions (AP2/ERF) lie at residues 118–174 and 210–267; these read QYRG…INFN and KFRG…TNFE. Residues 291 to 295 carry the EAR motif; sequence LDLRI.

This sequence belongs to the AP2/ERF transcription factor family. AP2 subfamily. May form homodimer. Interacts with TPR2/ASP1. In terms of tissue distribution, highly expressed in developing panicles and in young seedlings. Present at low levels at all developmental stages.

It is found in the nucleus. In terms of biological role, probable transcription factor. Involved in spikelet transition. Together with SNB, controls synergistically inflorescence architecture and floral meristem establishment via the regulation of spatio-temporal expression of B- and E-function floral organ identity genes in the lodicules and of spikelet meristem genes. Prevents lemma and palea elongation as well as grain growth. This chain is APETALA2-like protein 2, found in Oryza sativa subsp. japonica (Rice).